A 243-amino-acid polypeptide reads, in one-letter code: Probable transcriptional regulatory protein PTH_1024 (243 aa).

It belongs to the TACO1 family.

It is found in the cytoplasm. This chain is Probable transcriptional regulatory protein PTH_1024, found in Pelotomaculum thermopropionicum (strain DSM 13744 / JCM 10971 / SI).